The primary structure comprises 117 residues: Ribonuclease P protein component (117 aa).

The protein belongs to the RnpA family. In terms of assembly, consists of a catalytic RNA component (M1 or rnpB) and a protein subunit.

The catalysed reaction is Endonucleolytic cleavage of RNA, removing 5'-extranucleotides from tRNA precursor.. Its function is as follows. RNaseP catalyzes the removal of the 5'-leader sequence from pre-tRNA to produce the mature 5'-terminus. It can also cleave other RNA substrates such as 4.5S RNA. The protein component plays an auxiliary but essential role in vivo by binding to the 5'-leader sequence and broadening the substrate specificity of the ribozyme. This is Ribonuclease P protein component from Lactococcus lactis subsp. lactis (strain IL1403) (Streptococcus lactis).